The following is a 140-amino-acid chain: Biopolymer transport protein exbD1 (140 aa).

Over 1–16 the chain is Cytoplasmic; it reads MAFSSGNSGGPMADIN. Residues 17–37 traverse the membrane as a helical segment; the sequence is VTPLVDVMLVLLIIFIITAPL. Residues 38–140 are Periplasmic-facing; sequence MSHKVKVELP…GFVATKEKGQ (103 aa).

The protein belongs to the ExbD/TolR family. The accessory proteins ExbB and ExbD seem to form a complex with TonB.

It is found in the cell inner membrane. Involved in the TonB-dependent energy-dependent transport of various receptor-bound substrates. This Xanthomonas campestris pv. campestris (strain B100) protein is Biopolymer transport protein exbD1 (exbD1).